Reading from the N-terminus, the 156-residue chain is Small ribosomal subunit protein uS7 (156 aa).

The protein belongs to the universal ribosomal protein uS7 family. As to quaternary structure, part of the 30S ribosomal subunit. Contacts proteins S9 and S11.

Functionally, one of the primary rRNA binding proteins, it binds directly to 16S rRNA where it nucleates assembly of the head domain of the 30S subunit. Is located at the subunit interface close to the decoding center, probably blocks exit of the E-site tRNA. The chain is Small ribosomal subunit protein uS7 from Klebsiella pneumoniae subsp. pneumoniae (strain ATCC 700721 / MGH 78578).